Reading from the N-terminus, the 274-residue chain is (R)-stereoselective amidase (274 aa).

A CN hydrolase domain is found at Met1–Leu234. Residue Glu40 is the Proton acceptor of the active site. The active-site Proton donor is Lys108. Cys140 (nucleophile) is an active-site residue.

In terms of assembly, monomer.

The enzyme catalyses (R)-piperazine-2-carboxamide + H2O = (R)-piperazine-2-carboxylate + NH4(+). It carries out the reaction beta-alaninamide + H2O = beta-alanine + NH4(+). Completely inhibited by p-chloromercuribenzoate, N-ethylmaleimide, MnSO(4), MnCl(2), CoCl(2), NiCl(2), CuSO(4), CuCl(2), ZnSO(4), ZnCl(2), AgNO(3), CdCl(2), HgCl(2) and PbCl(2). Partially inhibited by FeCl(3) and Fe(NH(4))(2)(SO(4))(2). Slightly enhanced by dithiothreitol. Unaffected by LiBr, H(2)BO(3), NaCl, MgSO(4), MgCl(2), AlCl(3), KCl, CaCl(2), CrCl(3), RbCl, Na(2)MoO(4), (NH(4))(6)Mo(7)O(24), CsCl and BaCl(2). Unaffected by the chelating agents o-phenanthroline, 8-hydroxyquinoline, enthylenediaminetetraacetic acid and alpha,alpha'-dipyridyl. Not inhibited by the carbonyl reagents hydroxylamine, phenylhydrazine, hydrazine, D,L-penicillamine and D-cycloserine. Not affected by the serine protease inhibitor phenylmethanesulfonyl fluoride, the serine/cysteine protease inhibitor leupeptine or the aspartic protease inhibitor pepstatin. In terms of biological role, hydrolyzes (R)-piperazine-2-carboxamide and (R)-piperazine-2-tert-butylcarboxamide with strict R-stereoselectivity. Also active towards beta-alaninamide, piperidine-3-carboxmide, D-glutaminamide and slightly active towards L-glutaminamide and piperidine-4-carboxamide. The chain is (R)-stereoselective amidase from Pseudomonas sp.